A 342-amino-acid polypeptide reads, in one-letter code: BAG family molecular chaperone regulator 1 (342 aa).

Residues 1 to 41 (MMKMMRNKPTNLPTAGMTNGGRGSGGGGGGGGRESGGRDLE) form a disordered region. The segment covering 8–17 (KPTNLPTAGM) has biased composition (polar residues). A compositionally biased stretch (gly residues) spans 18–34 (TNGGRGSGGGGGGGGRE). The region spanning 65–141 (PMIRVRIKYG…MVLIEDPLSQ (77 aa)) is the Ubiquitin-like domain. A BAG domain is found at 160–238 (AISDISLEVD…NYVETLDALK (79 aa)). Serine 298 is subject to Phosphoserine.

As to quaternary structure, binds to the ATPase domain of HSP70/HSC70 chaperones.

Its function is as follows. Co-chaperone that regulates diverse cellular pathways, such as programmed cell death and stress responses. The sequence is that of BAG family molecular chaperone regulator 1 (BAG1) from Arabidopsis thaliana (Mouse-ear cress).